Reading from the N-terminus, the 696-residue chain is Putative zinc metalloproteinase YIL108W (696 aa).

A Glycyl lysine isopeptide (Lys-Gly) (interchain with G-Cter in ubiquitin) cross-link involves residue lysine 245. Histidine 318 lines the Zn(2+) pocket. Glutamate 319 is an active-site residue. Histidine 322 and histidine 328 together coordinate Zn(2+). Phosphoserine is present on serine 361. Glycyl lysine isopeptide (Lys-Gly) (interchain with G-Cter in ubiquitin) cross-links involve residues lysine 478, lysine 518, lysine 579, lysine 590, and lysine 596. The 174-residue stretch at glycine 522–alanine 695 folds into the Jacalin-type lectin domain.

It belongs to the peptidase M10B family. Zn(2+) serves as cofactor.

It localises to the cytoplasm. This Saccharomyces cerevisiae (strain ATCC 204508 / S288c) (Baker's yeast) protein is Putative zinc metalloproteinase YIL108W.